The chain runs to 1028 residues: MQVSRRKFFKICAGGMAGTSAAMLGFAPANVLAAPREYKLLRAFESRNTCTYCAVSCGMLLYSTGKPYNSLSSHTGTNTRSKLFHIEGDPDHPVSRGALCPKGAGSLDYVNSESRSLYPQYRAPGSDKWERISWKDAIKRIARLMKDDRDANFVEKDSNGKTVNRWATTGIMTASAMSNEAALLTQKWIRMLGMVPVCNQANTUHGPTVASLAPSFGRGAMTNNWVDIKNANLIIVQGGNPAEAHPVGFRWAIEAKKNGAKIIVIDPRFNRTASVADLHAPIRSGSDITFLMGVIRYLLETNQIQHEYVKHYTNASFLIDEGFKFEDGLFVGYNEEKRNYDKSKWNYQFDENGHAKRDMTLQHPRCVINILKEHVSRYTPEMVERITGVKQKLFLQICEEIGKTSVPNKTMTHLYALGFTEHSIGTQNIRSMAIIQLLLGNMGMPGGGINALRGHSNVQGTTDMGLLPMSLPGYMRLPNDKDTSYDQYINAITPKDIVPNQVNYYRHTSKFFVSMMKTFYGDNATKENGWGFDFLPKADRLYDPITHVKLMNEGKLHGWILQGFNVLNSLPNKNKTLSGMSKLKYLVVMDPLQTESSEFWRNFGESNNVNPAEIQTEVFRLPTTCFAEEEGSIVNSGRWTQWHWKGCDQPGEALPDVDILSMLREEMHELYKKEGGQGIESFEAMTWNYAQPHSPSAVELAKELNGYALEDLYDPNGNLMYKKGQLLNGFAHLRDDGTTTSGNWLYVGQWTEKGNQTANRDNSDPSGLGCTIGWGFAWPANRRVLYSRASLDINGNPWDKNRQLIKWNGKNWNWFDIADYGTQPPGSDTGPFIMSAEGVGRLFAVDKIANGPMPEHYEPVESPIDTNPFHPNVVTDPTLRIYKEDREFIGSNKEYPFVATTYRLTEHFHSWTAQSALNIIAQPQQFVEIGEKLAAEKGIQKGDMVKITSRRGYIKAVAVVTKRLKDLEIDGRVVHHIGLPIHWNMKALNGKGNRGFSTNTLTPSWGEAITQTPEYKTFLVNIEKVGEA.

The tat-type signal signal peptide spans 1-33; the sequence is MQVSRRKFFKICAGGMAGTSAAMLGFAPANVLA. The 4Fe-4S Mo/W bis-MGD-type domain maps to 43–114; it reads AFESRNTCTY…GSLDYVNSES (72 aa). Cys50, Cys53, Cys57, and Cys100 together coordinate [4Fe-4S] cluster. Residue Sec204 is a non-standard amino acid, selenocysteine.

It belongs to the prokaryotic molybdopterin-containing oxidoreductase family. As to quaternary structure, formate dehydrogenase is a membrane-bound complex, formed by subunits alpha, beta and gamma. The cofactor is Mo-bis(molybdopterin guanine dinucleotide). It depends on [4Fe-4S] cluster as a cofactor. Post-translationally, predicted to be exported by the Tat system. The position of the signal peptide cleavage has not been experimentally proven.

The protein resides in the periplasm. The enzyme catalyses formate + NAD(+) = CO2 + NADH. Functionally, allows to use formate as major electron donor during anaerobic respiration. Subunit alpha possibly forms the active site. The chain is Formate dehydrogenase major subunit (fdxG) from Haemophilus influenzae (strain ATCC 51907 / DSM 11121 / KW20 / Rd).